A 298-amino-acid chain; its full sequence is NADH-cytochrome b5 reductase 1 (298 aa).

A helical transmembrane segment spans residues 14 to 34 (VILAGAYLIDPSALPFVAAGV). The 104-residue stretch at 56–159 (KEYRKFKLVD…RGPKGQFSYT (104 aa)) folds into the FAD-binding FR-type domain. Residues 139 to 154 (SELSIGDSINARGPKG) and 165 to 197 (AIGMIAGGTGLTPMLQIIRAIVKNPEDKTQVNF) each bind FAD.

Belongs to the flavoprotein pyridine nucleotide cytochrome reductase family. As to quaternary structure, monomer. Component of the 2-(3-amino-3-carboxypropyl)histidine synthase complex composed of DPH1, DPH2, DPH3 and a NADH-dependent reductase, predominantly CBR1. The cofactor is FAD.

The protein localises to the mitochondrion outer membrane. The catalysed reaction is 2 Fe(III)-[cytochrome b5] + NADH = 2 Fe(II)-[cytochrome b5] + NAD(+) + H(+). It carries out the reaction 2 Fe(3+)-[Dph3] + NADH = 2 Fe(2+)-[Dph3] + NAD(+) + H(+). It participates in protein modification; peptidyl-diphthamide biosynthesis. Its function is as follows. NADH-dependent reductase for DPH3 and cytochrome b5. Required for the first step of diphthamide biosynthesis, a post-translational modification of histidine which occurs in elongation factor 2. DPH1 and DPH2 transfer a 3-amino-3-carboxypropyl (ACP) group from S-adenosyl-L-methionine (SAM) to a histidine residue, the reaction is assisted by a reduction system comprising DPH3 and a NADH-dependent reductase, predominantly CBR1. By reducing DPH3, also involved in the formation of the tRNA wobble base modification mcm5s 2U (5-methoxycarbonylmethyl-2-thiouridine), mediated by the elongator complex. The cytochrome b5/NADH cytochrome b5 reductase electron transfer system supports the catalytic activity of several sterol biosynthetic enzymes. The chain is NADH-cytochrome b5 reductase 1 (CBR1) from Mortierella alpina (Oleaginous fungus).